We begin with the raw amino-acid sequence, 357 residues long: DNA polymerase IV (357 aa).

The UmuC domain maps to 4–185; sequence IIHCDCDCFY…LPVERLFGVG (182 aa). Mg(2+) contacts are provided by Asp8 and Asp103. Residue Glu104 is part of the active site.

Belongs to the DNA polymerase type-Y family. In terms of assembly, monomer. The cofactor is Mg(2+).

The protein resides in the cytoplasm. The catalysed reaction is DNA(n) + a 2'-deoxyribonucleoside 5'-triphosphate = DNA(n+1) + diphosphate. Functionally, poorly processive, error-prone DNA polymerase involved in untargeted mutagenesis. Copies undamaged DNA at stalled replication forks, which arise in vivo from mismatched or misaligned primer ends. These misaligned primers can be extended by PolIV. Exhibits no 3'-5' exonuclease (proofreading) activity. May be involved in translesional synthesis, in conjunction with the beta clamp from PolIII. The sequence is that of DNA polymerase IV from Ralstonia nicotianae (strain ATCC BAA-1114 / GMI1000) (Ralstonia solanacearum).